The sequence spans 238 residues: ATP synthase subunit a (238 aa).

Transmembrane regions (helical) follow at residues 18-38 (LTLL…VFWA), 76-96 (YSLL…LGLF), 114-134 (NLAF…IEGV), 166-186 (SLAI…GLIV), and 193-213 (VYWW…SVFI).

The protein belongs to the ATPase A chain family. As to quaternary structure, F-type ATPases have 2 components, CF(1) - the catalytic core - and CF(0) - the membrane proton channel. CF(1) has five subunits: alpha(3), beta(3), gamma(1), delta(1), epsilon(1). CF(0) has three main subunits: a(1), b(2) and c(9-12). The alpha and beta chains form an alternating ring which encloses part of the gamma chain. CF(1) is attached to CF(0) by a central stalk formed by the gamma and epsilon chains, while a peripheral stalk is formed by the delta and b chains.

The protein localises to the cell membrane. In terms of biological role, key component of the proton channel; it plays a direct role in the translocation of protons across the membrane. The polypeptide is ATP synthase subunit a (Streptococcus pyogenes serotype M1).